The following is a 271-amino-acid chain: MVVAKKSLGQHFLTDESFLDRIVDALPPLNPLKLIEIGVGLGDLTLKLLDHYPLKTYEIDSSLCEKMRSKLKAQKKPFALELVEKDALFLKEEEPYFLISNLPYYIATRLVLNALKDPKCRGLLVMAQKEVALKFCAKDSQNALSVLTQAIGNATLLFDVPPSAFSPPPKVFSSVFEVIKEPLKEKALASLLQAPFFEEALQKGFETLEDFLKACFSSPRKTLSNNLKKSVSYREKLDKVLDFLALENQPTSVRASEIKDYLKLLEYLLKG.

S-adenosyl-L-methionine-binding residues include H11, L13, G38, E58, D86, and N101.

Belongs to the class I-like SAM-binding methyltransferase superfamily. rRNA adenine N(6)-methyltransferase family. RsmA subfamily.

It localises to the cytoplasm. It carries out the reaction adenosine(1518)/adenosine(1519) in 16S rRNA + 4 S-adenosyl-L-methionine = N(6)-dimethyladenosine(1518)/N(6)-dimethyladenosine(1519) in 16S rRNA + 4 S-adenosyl-L-homocysteine + 4 H(+). Specifically dimethylates two adjacent adenosines (A1518 and A1519) in the loop of a conserved hairpin near the 3'-end of 16S rRNA in the 30S particle. May play a critical role in biogenesis of 30S subunits. This chain is Ribosomal RNA small subunit methyltransferase A, found in Helicobacter pylori (strain Shi470).